Consider the following 520-residue polypeptide: Protein-export membrane protein SecD (520 aa).

The next 6 helical transmembrane spans lie at 10 to 30, 364 to 384, 391 to 411, 417 to 437, 461 to 481, and 483 to 503; these read IILL…PTLA, DSLL…FLRY, LPMI…AAGI, LSVI…LVII, FWVI…LAIL, and LGDL…GVLI.

The protein belongs to the SecD/SecF family. SecD subfamily. Part of the protein translocation apparatus. Forms a complex with SecF.

It localises to the cell membrane. Functionally, involved in protein export. This Haloquadratum walsbyi (strain DSM 16790 / HBSQ001) protein is Protein-export membrane protein SecD.